A 328-amino-acid polypeptide reads, in one-letter code: Methionyl-tRNA formyltransferase (328 aa).

A (6S)-5,6,7,8-tetrahydrofolate-binding site is contributed by 110–113 (SLLP).

This sequence belongs to the Fmt family.

It catalyses the reaction L-methionyl-tRNA(fMet) + (6R)-10-formyltetrahydrofolate = N-formyl-L-methionyl-tRNA(fMet) + (6S)-5,6,7,8-tetrahydrofolate + H(+). Attaches a formyl group to the free amino group of methionyl-tRNA(fMet). The formyl group appears to play a dual role in the initiator identity of N-formylmethionyl-tRNA by promoting its recognition by IF2 and preventing the misappropriation of this tRNA by the elongation apparatus. This Prochlorococcus marinus (strain MIT 9312) protein is Methionyl-tRNA formyltransferase.